A 192-amino-acid chain; its full sequence is Elongation factor P (192 aa).

It belongs to the elongation factor P family.

The protein resides in the cytoplasm. It participates in protein biosynthesis; polypeptide chain elongation. Its function is as follows. Involved in peptide bond synthesis. Stimulates efficient translation and peptide-bond synthesis on native or reconstituted 70S ribosomes in vitro. Probably functions indirectly by altering the affinity of the ribosome for aminoacyl-tRNA, thus increasing their reactivity as acceptors for peptidyl transferase. The protein is Elongation factor P of Borreliella afzelii (strain PKo) (Borrelia afzelii).